A 962-amino-acid polypeptide reads, in one-letter code: UvrABC system protein A (962 aa).

38–45 (GISGSGKS) contacts ATP. ABC transporter domains are found at residues 319-597 (WSKS…PDSL) and 617-944 (PSGR…RFLR). Position 649–656 (649–656 (GVSGSGKS)) interacts with ATP. The C4-type zinc-finger motif lies at 748–774 (CEACGGDGIIKIEMHFLADVYVPCEVC).

Belongs to the ABC transporter superfamily. UvrA family. In terms of assembly, forms a heterotetramer with UvrB during the search for lesions.

The protein resides in the cytoplasm. In terms of biological role, the UvrABC repair system catalyzes the recognition and processing of DNA lesions. UvrA is an ATPase and a DNA-binding protein. A damage recognition complex composed of 2 UvrA and 2 UvrB subunits scans DNA for abnormalities. When the presence of a lesion has been verified by UvrB, the UvrA molecules dissociate. The chain is UvrABC system protein A from Methanothermobacter thermautotrophicus (strain ATCC 29096 / DSM 1053 / JCM 10044 / NBRC 100330 / Delta H) (Methanobacterium thermoautotrophicum).